A 237-amino-acid chain; its full sequence is Large ribosomal subunit protein uL1 (237 aa).

The protein belongs to the universal ribosomal protein uL1 family. As to quaternary structure, part of the 50S ribosomal subunit.

Functionally, binds directly to 23S rRNA. The L1 stalk is quite mobile in the ribosome, and is involved in E site tRNA release. In terms of biological role, protein L1 is also a translational repressor protein, it controls the translation of the L11 operon by binding to its mRNA. In Dehalococcoides mccartyi (strain ATCC BAA-2266 / KCTC 15142 / 195) (Dehalococcoides ethenogenes (strain 195)), this protein is Large ribosomal subunit protein uL1.